The following is a 1305-amino-acid chain: Contactin-associated protein like 5-4 (1305 aa).

The N-terminal stretch at 1 to 24 is a signal peptide; it reads MNSVRRLNSILTLVLSGLWHLGLT. The Extracellular portion of the chain corresponds to 25–1237; that stretch reads ATNYNCDEPL…LTDTVQSDSA (1213 aa). In terms of domain architecture, F5/8 type C spans 30–174; sequence CDEPLASFLS…IGMRVEVYGC (145 aa). Cysteines 30 and 174 form a disulfide. 2 consecutive Laminin G-like domains span residues 180–360 and 367–544; these read IVGF…TFSC and PITF…IDLC. A glycan (N-linked (GlcNAc...) asparagine) is linked at Asn-282. Cysteines 329 and 360 form a disulfide. Asn-496 carries an N-linked (GlcNAc...) asparagine glycan. 3 cysteine pairs are disulfide-bonded: Cys-512/Cys-544, Cys-550/Cys-561, and Cys-555/Cys-570. One can recognise an EGF-like 1 domain in the interval 546–583; sequence IKDRCLPNYCEHGGHCAQNWTTFYCNCSDTGYTGATCH. Asn-571 carries an N-linked (GlcNAc...) asparagine glycan. An intrachain disulfide couples Cys-572 to Cys-582. The 207-residue stretch at 584–790 folds into the Fibrinogen C-terminal domain; sequence DSVYEQSCEV…LRCYGDRHFW (207 aa). Asn-622 carries an N-linked (GlcNAc...) asparagine glycan. A Laminin G-like 3 domain is found at 791-956; it reads NAVSFTTEAS…KLMSGVTPGC (166 aa). 4 disulfide bridges follow: Cys-929–Cys-956, Cys-960–Cys-973, Cys-967–Cys-982, and Cys-984–Cys-994. One can recognise an EGF-like 2 domain in the interval 957–995; that stretch reads LGHCSSYGSNCLNGGKCVEKQSGYSCDCTNSPNEGPFCQ. Residues 1014-1198 form the Laminin G-like 4 domain; it reads EPYLVIKNTS…VQGTLTESGC (185 aa). Asn-1057 is a glycosylation site (N-linked (GlcNAc...) asparagine). Cys-1163 and Cys-1198 are disulfide-bonded. A helical membrane pass occupies residues 1238–1258; that stretch reads VIGGIIALVTFVTFCVIGIMI. Residues 1259-1305 lie on the Cytoplasmic side of the membrane; that stretch reads HFLYLHKQSHCTNQTKEKEYSENLSNSFRNAIDLQNTASECKREYFI.

The protein belongs to the neurexin family.

Its subcellular location is the membrane. Its function is as follows. May play a role in the correct development and proper functioning of the peripheral and central nervous system and be involved in cell adhesion and intercellular communication. The chain is Contactin-associated protein like 5-4 (Cntnap5d) from Rattus norvegicus (Rat).